Consider the following 68-residue polypeptide: Large ribosomal subunit protein uL29 (68 aa).

This sequence belongs to the universal ribosomal protein uL29 family.

The protein is Large ribosomal subunit protein uL29 of Parvibaculum lavamentivorans (strain DS-1 / DSM 13023 / NCIMB 13966).